Here is a 705-residue protein sequence, read N- to C-terminus: Elongation factor G (705 aa).

The region spanning 8 to 294 (NLYRNFGIMA…AVIDYLPSPL (287 aa)) is the tr-type G domain. GTP-binding positions include 17–24 (AHIDAGKT), 92–96 (DTPGH), and 146–149 (NKMD).

The protein belongs to the TRAFAC class translation factor GTPase superfamily. Classic translation factor GTPase family. EF-G/EF-2 subfamily.

The protein resides in the cytoplasm. Catalyzes the GTP-dependent ribosomal translocation step during translation elongation. During this step, the ribosome changes from the pre-translocational (PRE) to the post-translocational (POST) state as the newly formed A-site-bound peptidyl-tRNA and P-site-bound deacylated tRNA move to the P and E sites, respectively. Catalyzes the coordinated movement of the two tRNA molecules, the mRNA and conformational changes in the ribosome. The polypeptide is Elongation factor G (Ruegeria pomeroyi (strain ATCC 700808 / DSM 15171 / DSS-3) (Silicibacter pomeroyi)).